Here is a 166-residue protein sequence, read N- to C-terminus: Cyclin-dependent kinase 4 inhibitor D (166 aa).

Methionine 1 carries the N-acetylmethionine modification. ANK repeat units lie at residues 41–69 (FGKT…SPNV), 73–102 (SGTT…DVNA), 106–135 (TGAL…LHHR), and 138–166 (TGLT…VAPL).

The protein belongs to the CDKN2 cyclin-dependent kinase inhibitor family. In terms of assembly, interacts with CDK6.

The protein resides in the nucleus. It is found in the cytoplasm. Its function is as follows. Interacts strongly with CDK4 and CDK6 and inhibits them. The sequence is that of Cyclin-dependent kinase 4 inhibitor D (CDKN2D) from Bos taurus (Bovine).